A 143-amino-acid polypeptide reads, in one-letter code: Sarcoplasmic/endoplasmic reticulum calcium ATPase (143 aa).

Belongs to the cation transport ATPase (P-type) (TC 3.A.3) family. Type IIA subfamily.

The protein resides in the endoplasmic reticulum membrane. The protein localises to the sarcoplasmic reticulum membrane. The catalysed reaction is Ca(2+)(in) + ATP + H2O = Ca(2+)(out) + ADP + phosphate + H(+). Functionally, this magnesium-dependent enzyme catalyzes the hydrolysis of ATP coupled with the transport of calcium. Transports calcium ions from the cytosol into the sarcoplasmic/endoplasmic reticulum lumen. Contributes to calcium sequestration involved in muscular excitation/contraction. The chain is Sarcoplasmic/endoplasmic reticulum calcium ATPase from Chionoecetes opilio (Atlantic snow crab).